A 472-amino-acid polypeptide reads, in one-letter code: 3-isopropylmalate dehydratase large subunit (472 aa).

Cys351, Cys412, and Cys415 together coordinate [4Fe-4S] cluster.

This sequence belongs to the aconitase/IPM isomerase family. LeuC type 1 subfamily. In terms of assembly, heterodimer of LeuC and LeuD. [4Fe-4S] cluster is required as a cofactor.

It catalyses the reaction (2R,3S)-3-isopropylmalate = (2S)-2-isopropylmalate. The protein operates within amino-acid biosynthesis; L-leucine biosynthesis; L-leucine from 3-methyl-2-oxobutanoate: step 2/4. In terms of biological role, catalyzes the isomerization between 2-isopropylmalate and 3-isopropylmalate, via the formation of 2-isopropylmaleate. This is 3-isopropylmalate dehydratase large subunit from Marinobacter nauticus (strain ATCC 700491 / DSM 11845 / VT8) (Marinobacter aquaeolei).